The chain runs to 253 residues: Triosephosphate isomerase (253 aa).

Residue 9-11 (NWK) coordinates substrate. Catalysis depends on histidine 95, which acts as the Electrophile. Glutamate 167 functions as the Proton acceptor in the catalytic mechanism. Substrate-binding positions include glycine 173, serine 213, and 234-235 (GG). Serine 213 is modified (phosphoserine).

The protein belongs to the triosephosphate isomerase family. In terms of assembly, homodimer.

Its subcellular location is the cytoplasm. The enzyme catalyses D-glyceraldehyde 3-phosphate = dihydroxyacetone phosphate. It functions in the pathway carbohydrate biosynthesis; gluconeogenesis. The protein operates within carbohydrate degradation; glycolysis; D-glyceraldehyde 3-phosphate from glycerone phosphate: step 1/1. Its function is as follows. Involved in the gluconeogenesis. Catalyzes stereospecifically the conversion of dihydroxyacetone phosphate (DHAP) to D-glyceraldehyde-3-phosphate (G3P). The sequence is that of Triosephosphate isomerase from Bacillus pumilus (strain SAFR-032).